We begin with the raw amino-acid sequence, 404 residues long: NADH-quinone oxidoreductase subunit D (404 aa).

It belongs to the complex I 49 kDa subunit family. As to quaternary structure, NDH-1 is composed of 14 different subunits. Subunits NuoB, C, D, E, F, and G constitute the peripheral sector of the complex.

It is found in the cell inner membrane. It catalyses the reaction a quinone + NADH + 5 H(+)(in) = a quinol + NAD(+) + 4 H(+)(out). In terms of biological role, NDH-1 shuttles electrons from NADH, via FMN and iron-sulfur (Fe-S) centers, to quinones in the respiratory chain. The immediate electron acceptor for the enzyme in this species is believed to be ubiquinone. Couples the redox reaction to proton translocation (for every two electrons transferred, four hydrogen ions are translocated across the cytoplasmic membrane), and thus conserves the redox energy in a proton gradient. This is NADH-quinone oxidoreductase subunit D from Leptospira borgpetersenii serovar Hardjo-bovis (strain JB197).